The chain runs to 219 residues: Peptide methionine sulfoxide reductase MsrA (219 aa).

Positions 1 to 20 (MGLFRSPRQNLPTAADALPG) are disordered. Residue cysteine 55 is part of the active site.

Belongs to the MsrA Met sulfoxide reductase family.

It catalyses the reaction L-methionyl-[protein] + [thioredoxin]-disulfide + H2O = L-methionyl-(S)-S-oxide-[protein] + [thioredoxin]-dithiol. The catalysed reaction is [thioredoxin]-disulfide + L-methionine + H2O = L-methionine (S)-S-oxide + [thioredoxin]-dithiol. Functionally, has an important function as a repair enzyme for proteins that have been inactivated by oxidation. Catalyzes the reversible oxidation-reduction of methionine sulfoxide in proteins to methionine. The sequence is that of Peptide methionine sulfoxide reductase MsrA from Rhodospirillum centenum (strain ATCC 51521 / SW).